The primary structure comprises 144 residues: MIFSDTVRYALIALAYLALNRDRLVKVEEIAKVHKIPRPFLAKVMHELSKRGVVYSVKGPRGGFSLAKEPDKITIWDIIELFGDAYKYEMCLLMPHKCSEFADNPCIVHHKWEELKSQIQDFFKGTTIKDLINIEEKHLFPVSR.

An HTH rrf2-type domain is found at 2 to 133 (IFSDTVRYAL…KGTTIKDLIN (132 aa)).

This chain is Putative HTH-type transcriptional regulator aq_268, found in Aquifex aeolicus (strain VF5).